Here is a 471-residue protein sequence, read N- to C-terminus: Regulator of microtubule dynamics protein 3 (471 aa).

Topologically, residues 1-9 (MSSLGTLGG) are mitochondrial intermembrane. The helical transmembrane segment at 10–32 (ARAGLGLLLGTAAGLGFLCALYS) threads the bilayer. The Cytoplasmic segment spans residues 33–471 (QRWKRTQRRG…LEELEVILGE (439 aa)). Residues 39 to 70 (QRRGQSQSQSNSLDYTQTSEPGRQVRPLRAAP) form a disordered region. Low complexity predominate over residues 41 to 50 (RGQSQSQSNS). 4 positions are modified to phosphoserine: Ser44, Ser46, Ser50, and Ser57. Residues 90–123 (LDRLEFVLTSLVALRREVEELRSSLQGLAGQIVG) are a coiled coil. The short motif at 156 to 162 (VYFTAAS) is the FFAT element. Thr159 is subject to Phosphothreonine. The tract at residues 169–206 (AESEGGYTTANAESDYERDSERESDGDGEDEVSCETVK) is disordered. A phosphoserine mark is found at Ser182, Ser192, Ser212, and Ser233. Residues 183–193 (DYERDSERESD) are compositionally biased toward basic and acidic residues.

This sequence belongs to the RMDN family. In terms of assembly, interacts with PTPN2. Interacts with microtubules. Interacts with VAPB. Interacts (via FFAT motif) with MOSPD2 (via MSP domain). Interacts (via phosphorylated FFAT motif) with MOSPD2, VAPA and VAPB. Post-translationally, phosphorylation at Thr-160 of the FFAT motif activates interaction with MOSPD2, VAPA and VAPB.

The protein localises to the mitochondrion outer membrane. It is found in the cytoplasm. Its subcellular location is the nucleus. The protein resides in the cytoskeleton. It localises to the spindle. The protein localises to the spindle pole. Its function is as follows. Involved in cellular calcium homeostasis regulation. May participate in differentiation and apoptosis of keratinocytes. Overexpression induces apoptosis. This chain is Regulator of microtubule dynamics protein 3, found in Bos taurus (Bovine).